Consider the following 204-residue polypeptide: FMN-dependent NADH:quinone oxidoreductase 1 (204 aa).

Residues S10 and 15–17 (SLS) contribute to the FMN site.

Belongs to the azoreductase type 1 family. Homodimer. FMN is required as a cofactor.

It carries out the reaction 2 a quinone + NADH + H(+) = 2 a 1,4-benzosemiquinone + NAD(+). The catalysed reaction is N,N-dimethyl-1,4-phenylenediamine + anthranilate + 2 NAD(+) = 2-(4-dimethylaminophenyl)diazenylbenzoate + 2 NADH + 2 H(+). Quinone reductase that provides resistance to thiol-specific stress caused by electrophilic quinones. Its function is as follows. Also exhibits azoreductase activity. Catalyzes the reductive cleavage of the azo bond in aromatic azo compounds to the corresponding amines. The chain is FMN-dependent NADH:quinone oxidoreductase 1 from Rhizobium etli (strain ATCC 51251 / DSM 11541 / JCM 21823 / NBRC 15573 / CFN 42).